Reading from the N-terminus, the 120-residue chain is Non-specific lipid-transfer protein 6 (120 aa).

A signal peptide spans 1–26 (MARSMSLKLACVVVLCLLVDAPLAQG). 2 cysteine pairs are disulfide-bonded: Cys57-Cys102 and Cys77-Cys116.

It belongs to the plant LTP family. In terms of tissue distribution, specifically expressed in fiber cells.

Its function is as follows. Plant non-specific lipid-transfer proteins transfer phospholipids as well as galactolipids across membranes. May play a role in wax or cutin deposition in the cell walls of expanding epidermal cells and certain secretory tissues. In Gossypium hirsutum (Upland cotton), this protein is Non-specific lipid-transfer protein 6 (LTP6).